A 439-amino-acid polypeptide reads, in one-letter code: MNAPPQKRVYPKLPVWIVEDHHEVVQHIYRAIGSRHIPMKGIKMVHLDSHPDLLIPVNMPADTVYDKETLLRELSIENWIMPMVYAGHVSHVAWLHPYWAQQIREGQHCMCVGKDSSTTTIRVTSKDDYFLSDALYVPLDHLEHPKELHLHVIRVDPVVSSQTTKLENGQSGAKIPKAAQTQDDMQSKADTPCTSSSQPPDGSAASGNISETAKKKADDGSTSYITDKLLAVIEQTDPFILDIDLDFFSCKNPFKDMFSQEEFTLLKELYSFSKPQQDPDEEELLECVERRTRQLEDLEAAFADLLEDDGQETVERLAANPGMKSLFRLVHSLKNRPSPPDYEMVHQAGLTCDNSELPHHISSDEEIQQMITAVQLFLETLPKPTIVTISRSSLDEYCPAEQVDSIQIRVLDILESLFGCLDVHRDYESIPAESTSHTA.

Residues 163-219 (TTKLENGQSGAKIPKAAQTQDDMQSKADTPCTSSSQPPDGSAASGNISETAKKKADD) are disordered. Over residues 179–211 (AQTQDDMQSKADTPCTSSSQPPDGSAASGNISE) the composition is skewed to polar residues.

This sequence belongs to the UPF0489 family.

The sequence is that of UPF0489 protein C5orf22 homolog from Danio rerio (Zebrafish).